The primary structure comprises 303 residues: Bifunctional protein FolD 2 (303 aa).

NADP(+) is bound by residues 169–171, Ser-194, and Ile-235; that span reads GRS.

Belongs to the tetrahydrofolate dehydrogenase/cyclohydrolase family. In terms of assembly, homodimer.

The catalysed reaction is (6R)-5,10-methylene-5,6,7,8-tetrahydrofolate + NADP(+) = (6R)-5,10-methenyltetrahydrofolate + NADPH. It catalyses the reaction (6R)-5,10-methenyltetrahydrofolate + H2O = (6R)-10-formyltetrahydrofolate + H(+). It participates in one-carbon metabolism; tetrahydrofolate interconversion. In terms of biological role, catalyzes the oxidation of 5,10-methylenetetrahydrofolate to 5,10-methenyltetrahydrofolate and then the hydrolysis of 5,10-methenyltetrahydrofolate to 10-formyltetrahydrofolate. This chain is Bifunctional protein FolD 2, found in Pseudomonas putida (strain GB-1).